We begin with the raw amino-acid sequence, 389 residues long: Acyl-[acyl-carrier-protein] dehydrogenase MbtN (389 aa).

The protein belongs to the acyl-CoA dehydrogenase family. It depends on FAD as a cofactor.

The protein operates within siderophore biosynthesis; mycobactin biosynthesis. In terms of biological role, catalyzes the dehydrogenation at the alpha-beta position of ACP-bound acyl chains. This results in the introduction of a double bond in the lipidic chain, which is further transferred to the epsilon-amino group of lysine residue in the mycobactin core by MbtK. The sequence is that of Acyl-[acyl-carrier-protein] dehydrogenase MbtN (mbtN) from Mycobacterium sp. (strain MCS).